An 850-amino-acid chain; its full sequence is Mitogen-activated protein kinase kinase kinase 11 (850 aa).

Position 11 is a phosphoserine (Ser-11). Positions 16 to 35 (WNGSGSGGGGGTGGVRPEGS) are disordered. Over residues 17-31 (NGSGSGGGGGTGGVR) the composition is skewed to gly residues. Ser-35 carries the post-translational modification Phosphoserine. Residues 42-106 (YANPVWTALF…PSNYVSRGGG (65 aa)) form the SH3 domain. In terms of domain architecture, Protein kinase spans 118 to 380 (LRLEEVIGIG…ASILQQLEAL (263 aa)). ATP-binding positions include 124 to 132 (IGIGGFGKV) and Lys-145. Asp-242 serves as the catalytic Proton acceptor. The residue at position 278 (Thr-278) is a Phosphothreonine; by autocatalysis. Residue Ser-282 is modified to Phosphoserine; by autocatalysis and MAP4K1. Phosphoserine is present on Ser-395. Leucine-zipper regions lie at residues 404–425 (IQGL…EEEL) and 439–460 (LRRR…ELTL). Residues Ser-508 and Ser-525 each carry the phosphoserine modification. The segment at 535 to 644 (QLEPTESGQT…SSGTPKLIQR (110 aa)) is disordered. The segment covering 538–547 (PTESGQTWGR) has biased composition (polar residues). Phosphoserine occurs at positions 549, 556, and 557. The span at 551–563 (RRLEDSSNGERRA) shows a compositional bias: basic and acidic residues. The segment covering 598-610 (SSPLGSPSTPPAL) has biased composition (low complexity). Ser-655 is modified (phosphoserine). The interval 657 to 850 (GLGRDLQPPG…QAPWAPEAGP (194 aa)) is disordered. Positions 677-693 (TAPPPAQMPSPCPPELP) are enriched in pro residues. Residues 700–711 (LSQTTPDAHSSP) show a composition bias toward polar residues. Ser-709 is subject to Phosphoserine. Thr-712 is subject to Phosphothreonine. Residues Ser-728, Ser-731, Ser-743, Ser-751, Ser-761, Ser-773, Ser-792, Ser-796, and Ser-818 each carry the phosphoserine modification. Residues 763–776 (PLGLISRPRPSPLR) are compositionally biased toward low complexity. Residues 790-802 (RPSPLPSPQPAPR) are compositionally biased toward pro residues. The span at 803–819 (RAPWTLFPDSDPFWDSP) shows a compositional bias: low complexity.

It belongs to the protein kinase superfamily. STE Ser/Thr protein kinase family. MAP kinase kinase kinase subfamily. Homodimer; undergoes dimerization during activation. Interacts with MAP2K4/MKK4 and MAP2K7/MKK7. Found in a complex with SH3RF1, RAC1, MAP2K7/MKK7, MAPK8IP1/JIP1 and MAPK8/JNK1. Mg(2+) is required as a cofactor. Autophosphorylation on serine and threonine residues within the activation loop plays a role in enzyme activation. Thr-278 is likely to be the main autophosphorylation site. Phosphorylation of Ser-556 and Ser-557 is induced by CDC42.

It localises to the cytoplasm. Its subcellular location is the cytoskeleton. It is found in the microtubule organizing center. The protein resides in the centrosome. It catalyses the reaction L-seryl-[protein] + ATP = O-phospho-L-seryl-[protein] + ADP + H(+). The catalysed reaction is L-threonyl-[protein] + ATP = O-phospho-L-threonyl-[protein] + ADP + H(+). Homodimerization via the leucine zipper domains is required for autophosphorylation and subsequent activation. Activates the JUN N-terminal pathway. Required for serum-stimulated cell proliferation and for mitogen and cytokine activation of MAPK14 (p38), MAPK3 (ERK) and MAPK8 (JNK1) through phosphorylation and activation of MAP2K4/MKK4 and MAP2K7/MKK7. Plays a role in mitogen-stimulated phosphorylation and activation of BRAF, but does not phosphorylate BRAF directly. Influences microtubule organization during the cell cycle. The sequence is that of Mitogen-activated protein kinase kinase kinase 11 (Map3k11) from Mus musculus (Mouse).